The sequence spans 200 residues: Cytochrome c biogenesis ATP-binding export protein CcmA (200 aa).

In terms of domain architecture, ABC transporter spans 3–199 (LSGRRVICVR…DSRELRIGGV (197 aa)). Residue 35–42 (GRNGSGKT) participates in ATP binding.

The protein belongs to the ABC transporter superfamily. CcmA exporter (TC 3.A.1.107) family. In terms of assembly, the complex is composed of two ATP-binding proteins (CcmA) and two transmembrane proteins (CcmB).

Its subcellular location is the cell inner membrane. It carries out the reaction heme b(in) + ATP + H2O = heme b(out) + ADP + phosphate + H(+). In terms of biological role, part of the ABC transporter complex CcmAB involved in the biogenesis of c-type cytochromes; once thought to export heme, this seems not to be the case, but its exact role is uncertain. Responsible for energy coupling to the transport system. In Bradyrhizobium diazoefficiens (strain JCM 10833 / BCRC 13528 / IAM 13628 / NBRC 14792 / USDA 110), this protein is Cytochrome c biogenesis ATP-binding export protein CcmA.